Reading from the N-terminus, the 1179-residue chain is DNA-directed RNA polymerase subunit beta' (1179 aa).

The Zn(2+) site is built by cysteine 60, cysteine 62, cysteine 75, and cysteine 78. Mg(2+)-binding residues include aspartate 449, aspartate 451, and aspartate 453. Positions 796, 871, 878, and 881 each coordinate Zn(2+).

This sequence belongs to the RNA polymerase beta' chain family. In terms of assembly, the RNAP catalytic core consists of 2 alpha, 1 beta, 1 beta' and 1 omega subunit. When a sigma factor is associated with the core the holoenzyme is formed, which can initiate transcription. It depends on Mg(2+) as a cofactor. The cofactor is Zn(2+).

It carries out the reaction RNA(n) + a ribonucleoside 5'-triphosphate = RNA(n+1) + diphosphate. Its function is as follows. DNA-dependent RNA polymerase catalyzes the transcription of DNA into RNA using the four ribonucleoside triphosphates as substrates. This is DNA-directed RNA polymerase subunit beta' from Symbiobacterium thermophilum (strain DSM 24528 / JCM 14929 / IAM 14863 / T).